Consider the following 573-residue polypeptide: Protein translocase subunit SecD (573 aa).

Residues 13-33 (YLSVFLVMLIGIYLLVFFTGD) traverse the membrane as a helical segment. The disordered stretch occupies residues 127–200 (AQPAAEEPQP…PPAEAPATDP (74 aa)). Pro residues-rich tracts occupy residues 135–154 (QPAPSAEPQPPGQPAAPPPA) and 161–194 (SPQPGAQPRPYPQDPAPSPNPTSPASPPPAPPAE). The next 5 helical transmembrane spans lie at 385–405 (AGMIAGAIGLLLVLVYSLLYY), 410–430 (LLTALSLVASGSMVFAILVLL), 441–461 (AGIAGLIIGIGTTADSFVVFF), 489–509 (IVSGNAVTFLAAAVLYFLAIG), and 514–534 (FAFTLGLTTILDLVVVFLVTW).

The protein belongs to the SecD/SecF family. SecD subfamily. Forms a complex with SecF. Part of the essential Sec protein translocation apparatus which comprises SecA, SecYEG and auxiliary proteins SecDF. Other proteins may also be involved.

Its subcellular location is the cell membrane. Functionally, part of the Sec protein translocase complex. Interacts with the SecYEG preprotein conducting channel. SecDF uses the proton motive force (PMF) to complete protein translocation after the ATP-dependent function of SecA. In Mycobacterium tuberculosis (strain CDC 1551 / Oshkosh), this protein is Protein translocase subunit SecD.